The primary structure comprises 171 residues: uncharacterized protein (171 aa).

The first 20 residues, 1-20, serve as a signal peptide directing secretion; that stretch reads MRRVLFSCFCGLLWSSSGWA. An intrachain disulfide couples cysteine 40 to cysteine 80.

This sequence belongs to the fimbrial protein family.

Its subcellular location is the fimbrium. Its function is as follows. Part of the sfmACDHF fimbrial operon. Could contribute to adhesion to various surfaces in specific environmental niches. Increases adhesion to eukaryotic T24 bladder epithelial cells in the absence of fim genes. This is an uncharacterized protein from Escherichia coli (strain K12).